The following is a 274-amino-acid chain: 2,3,4,5-tetrahydropyridine-2,6-dicarboxylate N-succinyltransferase (274 aa).

Positions 104 and 141 each coordinate substrate.

The protein belongs to the transferase hexapeptide repeat family. In terms of assembly, homotrimer.

The protein localises to the cytoplasm. It carries out the reaction (S)-2,3,4,5-tetrahydrodipicolinate + succinyl-CoA + H2O = (S)-2-succinylamino-6-oxoheptanedioate + CoA. Its pathway is amino-acid biosynthesis; L-lysine biosynthesis via DAP pathway; LL-2,6-diaminopimelate from (S)-tetrahydrodipicolinate (succinylase route): step 1/3. The chain is 2,3,4,5-tetrahydropyridine-2,6-dicarboxylate N-succinyltransferase from Shewanella sediminis (strain HAW-EB3).